The following is a 277-amino-acid chain: MAAARPFLKMHGAGNDFVVLDARAHPLDLAPAAAARIADRHRGVGCDQIILIERDDGAAAFMRILNADGSESGACGNATRCVAALLAGETGARRLTIRTNAGLLPAEIKGPTLVEVDMGAPKLGWEDIPLAEPADTLSLRLALGPVQNPAACSMGNPHATFFVDDLTHLQIETIGPKLEHARLFPERANIGFARIDAPDRIRLRVWERGAGLTLACGSGACAALVNAHRRGLAARRAEIEMDGGTLTLTWRDDGHVLMEGPVALVFEGELDAAMLAP.

N15, Q48, and N66 together coordinate substrate. C75 (proton donor) is an active-site residue. Residues 76–77, N156, N189, and 207–208 contribute to the substrate site; these read GN and ER. C216 functions as the Proton acceptor in the catalytic mechanism. 217-218 contributes to the substrate binding site; the sequence is GS.

The protein belongs to the diaminopimelate epimerase family. Homodimer.

The protein resides in the cytoplasm. It carries out the reaction (2S,6S)-2,6-diaminopimelate = meso-2,6-diaminopimelate. Its pathway is amino-acid biosynthesis; L-lysine biosynthesis via DAP pathway; DL-2,6-diaminopimelate from LL-2,6-diaminopimelate: step 1/1. Functionally, catalyzes the stereoinversion of LL-2,6-diaminopimelate (L,L-DAP) to meso-diaminopimelate (meso-DAP), a precursor of L-lysine and an essential component of the bacterial peptidoglycan. This chain is Diaminopimelate epimerase, found in Acidiphilium cryptum (strain JF-5).